A 188-amino-acid polypeptide reads, in one-letter code: Elongation factor P (188 aa).

N6-(3,6-diaminohexanoyl)-5-hydroxylysine is present on Lys-34.

It belongs to the elongation factor P family. Post-translationally, may be beta-lysylated on the epsilon-amino group of Lys-34 by the combined action of EpmA and EpmB, and then hydroxylated on the C5 position of the same residue by EpmC (if this protein is present). Lysylation is critical for the stimulatory effect of EF-P on peptide-bond formation. The lysylation moiety may extend toward the peptidyltransferase center and stabilize the terminal 3-CCA end of the tRNA. Hydroxylation of the C5 position on Lys-34 may allow additional potential stabilizing hydrogen-bond interactions with the P-tRNA.

The protein localises to the cytoplasm. Its pathway is protein biosynthesis; polypeptide chain elongation. Involved in peptide bond synthesis. Alleviates ribosome stalling that occurs when 3 or more consecutive Pro residues or the sequence PPG is present in a protein, possibly by augmenting the peptidyl transferase activity of the ribosome. Modification of Lys-34 is required for alleviation. The protein is Elongation factor P of Stenotrophomonas maltophilia (strain K279a).